The primary structure comprises 246 residues: uncharacterized protein (246 aa).

A run of 4 helical transmembrane segments spans residues 32–52, 69–89, 121–141, and 146–166; these read TLFF…VGFI, IIAI…MCPF, IYFK…GVKI, and LAYL…MFFC. 4Fe-4S ferredoxin-type domains follow at residues 185 to 213 and 210 to 239; these read FKLK…ITEK and ITEK…FSAF. Residues cysteine 194, cysteine 197, cysteine 200, cysteine 204, cysteine 219, cysteine 222, cysteine 225, and cysteine 229 each coordinate [4Fe-4S] cluster.

The protein localises to the cell membrane. This is an uncharacterized protein from Methanocaldococcus jannaschii (strain ATCC 43067 / DSM 2661 / JAL-1 / JCM 10045 / NBRC 100440) (Methanococcus jannaschii).